The sequence spans 130 residues: Glycine cleavage system H protein (130 aa).

The 83-residue stretch at 24–106 (IYSVGITEHA…YADGWLFRIR (83 aa)) folds into the Lipoyl-binding domain. N6-lipoyllysine is present on lysine 65.

This sequence belongs to the GcvH family. In terms of assembly, the glycine cleavage system is composed of four proteins: P, T, L and H. Requires (R)-lipoate as cofactor.

The glycine cleavage system catalyzes the degradation of glycine. The H protein shuttles the methylamine group of glycine from the P protein to the T protein. This is Glycine cleavage system H protein from Pectobacterium carotovorum subsp. carotovorum (strain PC1).